Reading from the N-terminus, the 697-residue chain is MDQTLSKEERNELMDLLQITRAAWGNLSMMKKAYKNVSKLYHPDKGGDSAKMQRLNELFQRVQVTLMEIRSQCGSSSSQGYFSEDFYFGPTTFQYSPMDRDAVREDLPNPGEGSWGKWWREFVNRQCCDDLFCSETMSSSSDEDTPPAAQPPPPPAPSPEEEDEIEFVEETPSSCDGSSSQSSYTCTPPKRKKTEEKKPDDFPVCLYSFLSHAIYSNKTMNSFLIYTTLEKARQLYKTVEKSKIVVDFKASFSYQDEEGEGCLLFLITLGKHRVSAVKHFCVSQCTFSFIHCKAVVKPLELYKTLSKPPFKLLEENKPGVSMFEFQEEKEQSVNWQEICNFANEANISDVLLLLGIYIDFAVEPGKCGKCEKKQHKFHYNYHKAHHANACLFLESRAQKNICQQAVDQVLAAKRLKLVECSRIELLEERFLQLFDEMDDFLHGEIEILRWMAGVAWYTILLDNSWDVFQNILQLITTSQPKKRNVLIKGPINSGKTTLASAFMHFFDGKALNINCPADKLSFELGCAIDQFCVLLDDVKGQITLNKHLQPGQGVNNLDNLRDHLDGTIKVNLEKKHVNKRSQIFPPVIMTMNEYLLPPTIGVRFALHLHLKPKAYLKQSLEKSDLVAKRILNSGYTILLLLLWYNPVDSFTPKVQEKVVQWKETLEKYVSITQFGNIQQNIIDGKDPLHGIVIEEQM.

M1 carries the N-acetylmethionine; by host modification. Positions E12–S75 constitute a J domain. The binding to host RB1 protein and transforming activity stretch occupies residues L131–E135. Phosphoserine; by host is present on residues S134 and S140. Residues T136 to K198 are disordered. The span at A148–S158 shows a compositional bias: pro residues. The segment covering P159–E169 has biased composition (acidic residues). Low complexity predominate over residues E170–S183. T187 is subject to Phosphothreonine; by host. Residues P188 to E196 carry the Nuclear localization signal motif. The T-ag OBD DNA-binding region spans P203 to F323. The T-ag D1-type zinc finger occupies E330–R422. The Zn(2+) site is built by C367, C370, H378, and H382. Positions N463 to S623 constitute an SF3 helicase domain. G489–T496 provides a ligand contact to ATP.

In terms of assembly, forms homohexamers in the presence of ATP. Interacts with host HDAC1. Interacts (via LXCXE domain) with host RB1; the interaction induces the aberrant dissociation of RB1-E2F1 complex thereby disrupting RB1's activity. Interacts (via LXCXE domain) with host pRB-related proteins RBL1 and RBL2. Interacts (via C-terminus) with host TOP1 and POLA1 allowing DNA replication. Interacts with host TP53, inhibiting TP53 binding to DNA. Interacts with host preinitiation complex components TBP, TFIIA and TFIID to regulate transcription initiation. Requires Mg(2+) as cofactor. Post-translationally, phosphorylated on both serine and threonine residues. Small t antigen inhibits the dephosphorylation by the AC form of PP2A. In terms of processing, O-Glycosylated near the C-terminal region. Acetylated by CBP in a TP53-dependent manner.

It localises to the host nucleus. The catalysed reaction is Couples ATP hydrolysis with the unwinding of duplex DNA by translocating in the 3'-5' direction.. It catalyses the reaction ATP + H2O = ADP + phosphate + H(+). In terms of biological role, isoform large T antigen is a key early protein essential for both driving viral replication and inducing cellular transformation. Plays a role in viral genome replication by driving entry of quiescent cells into the cell cycle and by autoregulating the synthesis of viral early mRNA. Displays highly oncogenic activities by corrupting the host cellular checkpoint mechanisms that guard cell division and the transcription, replication, and repair of DNA. Participates in the modulation of cellular gene expression preceeding viral DNA replication. This step involves binding to host key cell cycle regulators retinoblastoma protein RB1/pRb and TP53. Induces the disassembly of host E2F1 transcription factors from RB1, thus promoting transcriptional activation of E2F1-regulated S-phase genes. Inhibits host TP53 binding to DNA, abrogating the ability of TP53 to stimulate gene expression. Plays the role of a TFIID-associated factor (TAF) in transcription initiation for all three RNA polymerases, by stabilizing the TBP-TFIIA complex on promoters. Initiates viral DNA replication and unwinding via interactions with the viral origin of replication. Binds two adjacent sites in the SV40 origin. The replication fork movement is facilitated by Large T antigen helicase activity. Has processive 3'-5' DNA helicase activity which requires a short 3' single-stranded region and ATP. Activates the transcription of viral late mRNA, through host TBP and TFIIA stabilization. Interferes with histone deacetylation mediated by HDAC1, leading to activation of transcription. The polypeptide is Large T antigen (Chlorocebus aethiops (Green monkey)).